The primary structure comprises 225 residues: Reticulon-like protein B9 (225 aa).

A Reticulon domain is found at 39-224 (VADILLWREP…PRGTVKNKKF (186 aa)). The next 3 helical transmembrane spans lie at 50–70 (IAAT…VVEY), 72–92 (FITL…IWST), and 152–172 (YIVS…IGFV).

It localises to the endoplasmic reticulum membrane. This chain is Reticulon-like protein B9 (RTNLB9), found in Arabidopsis thaliana (Mouse-ear cress).